The following is a 434-amino-acid chain: V-type ATP synthase beta chain (434 aa).

Belongs to the ATPase alpha/beta chains family.

Its function is as follows. Produces ATP from ADP in the presence of a proton gradient across the membrane. The V-type beta chain is a regulatory subunit. In Borreliella burgdorferi (strain ATCC 35210 / DSM 4680 / CIP 102532 / B31) (Borrelia burgdorferi), this protein is V-type ATP synthase beta chain (atpB).